The primary structure comprises 22 residues: Mu-conotoxin GIIIB (22 aa).

3 disulfide bridges follow: cysteine 3/cysteine 15, cysteine 4/cysteine 20, and cysteine 10/cysteine 21. Proline 6 and proline 7 each carry 4-hydroxyproline; partial. Residue proline 17 is modified to 4-hydroxyproline. Position 22 is an alanine amide (alanine 22).

It belongs to the conotoxin M superfamily. In terms of tissue distribution, expressed by the venom duct.

The protein localises to the secreted. In terms of biological role, mu-conotoxins block voltage-gated sodium channels (Nav). The chain is Mu-conotoxin GIIIB from Conus geographus (Geography cone).